The following is a 363-amino-acid chain: 3-dehydroquinate synthase (363 aa).

Residues 134–135 (TT), Lys-147, and Lys-156 each bind NAD(+). Zn(2+) contacts are provided by Glu-189, His-254, and His-271.

This sequence belongs to the sugar phosphate cyclases superfamily. Dehydroquinate synthase family. It depends on Co(2+) as a cofactor. The cofactor is Zn(2+). NAD(+) is required as a cofactor.

The protein resides in the cytoplasm. The enzyme catalyses 7-phospho-2-dehydro-3-deoxy-D-arabino-heptonate = 3-dehydroquinate + phosphate. It participates in metabolic intermediate biosynthesis; chorismate biosynthesis; chorismate from D-erythrose 4-phosphate and phosphoenolpyruvate: step 2/7. Its function is as follows. Catalyzes the conversion of 3-deoxy-D-arabino-heptulosonate 7-phosphate (DAHP) to dehydroquinate (DHQ). In Prochlorococcus marinus (strain MIT 9215), this protein is 3-dehydroquinate synthase.